Consider the following 548-residue polypeptide: Organic cation transporter protein (548 aa).

At 1 to 22 (MGYDDVITHLGEFGPYQKRIYY) the chain is on the cytoplasmic side. A helical transmembrane segment spans residues 23 to 43 (LLCLPAIVCAFHKLAGVFLLA). At 44–127 (KPDFRCALPY…TEWNLVCSRS (84 aa)) the chain is on the extracellular side. Residues asparagine 55, asparagine 67, asparagine 89, and asparagine 97 are each glycosylated (N-linked (GlcNAc...) asparagine). The chain crosses the membrane as a helical span at residues 128 to 148 (LLSATSDSLFMLGVLLGSLIF). The Cytoplasmic portion of the chain corresponds to 149–158 (GQMSDKLGRK). Residues 159 to 179 (PTFFASLVLQLIFGVLAAVAP) traverse the membrane as a helical segment. The Extracellular portion of the chain corresponds to 180–189 (EYFSYTISRM). Residues 190–210 (IVGATTSGVFLVAYVIALEMV) traverse the membrane as a helical segment. The Cytoplasmic segment spans residues 211-219 (GSSYRLFAG). The helical transmembrane segment at 220-240 (VAMQMFFSVGFMLTAGFAYFI) threads the bilayer. Topologically, residues 241–244 (HDWR) are extracellular. Residues 245 to 265 (WLQIAITLPGLLFLCYYWIIP) traverse the membrane as a helical segment. Residues 266 to 337 (ESARWLLMKG…LLRYPNLRRK (72 aa)) lie on the Cytoplasmic side of the membrane. Residues 338 to 358 (TLLIFFDWFVNSGVYYGLSWN) traverse the membrane as a helical segment. The Extracellular portion of the chain corresponds to 359–366 (TNNLGGNQ). Residues 367 to 387 (LVNFMISGAVEIPGYTLLLFT) form a helical membrane-spanning segment. The Cytoplasmic segment spans residues 388 to 395 (LNRWGRRS). The helical transmembrane segment at 396–416 (ILCGTMMVAGISLLATIFVPS) threads the bilayer. At 417 to 419 (DMN) the chain is on the extracellular side. A helical membrane pass occupies residues 420–440 (WLIVACAMIGKLAITSSYGTI). Topologically, residues 441–453 (YIFSAEQFPTVVR) are cytoplasmic. A helical membrane pass occupies residues 454-474 (NVGLGASSMVARVGGILAPYL). Residues 475 to 482 (KLLGEIWR) lie on the Extracellular side of the membrane. The chain crosses the membrane as a helical span at residues 483–503 (PLPLIICGALSLTAGLLSLLL). Over 504–548 (PETLNKPMPETIEDGENFGKKPAPQETAEEGGTQELSGMLNGKSG) the chain is Cytoplasmic. Residues 512–548 (PETIEDGENFGKKPAPQETAEEGGTQELSGMLNGKSG) form a disordered region.

This sequence belongs to the major facilitator (TC 2.A.1) superfamily. Organic cation transporter (TC 2.A.1.19) family. In terms of tissue distribution, expressed in embryos and adults at low level. Expressed at higher level in third instar larvae.

It is found in the membrane. Its function is as follows. Probably transports organic cations. The protein is Organic cation transporter protein (Orct) of Drosophila melanogaster (Fruit fly).